Consider the following 329-residue polypeptide: Lipoyl synthase (329 aa).

Residues 1-23 (MTDLTATPAPAEPAASAYDPTAK) are disordered. [4Fe-4S] cluster-binding residues include Cys-76, Cys-81, Cys-87, Cys-102, Cys-106, Cys-109, and Ser-316. The Radical SAM core domain occupies 87–305 (CFGKGTATFM…EEEAYKMGFT (219 aa)).

It belongs to the radical SAM superfamily. Lipoyl synthase family. The cofactor is [4Fe-4S] cluster.

The protein resides in the cytoplasm. The enzyme catalyses [[Fe-S] cluster scaffold protein carrying a second [4Fe-4S](2+) cluster] + N(6)-octanoyl-L-lysyl-[protein] + 2 oxidized [2Fe-2S]-[ferredoxin] + 2 S-adenosyl-L-methionine + 4 H(+) = [[Fe-S] cluster scaffold protein] + N(6)-[(R)-dihydrolipoyl]-L-lysyl-[protein] + 4 Fe(3+) + 2 hydrogen sulfide + 2 5'-deoxyadenosine + 2 L-methionine + 2 reduced [2Fe-2S]-[ferredoxin]. The protein operates within protein modification; protein lipoylation via endogenous pathway; protein N(6)-(lipoyl)lysine from octanoyl-[acyl-carrier-protein]: step 2/2. Functionally, catalyzes the radical-mediated insertion of two sulfur atoms into the C-6 and C-8 positions of the octanoyl moiety bound to the lipoyl domains of lipoate-dependent enzymes, thereby converting the octanoylated domains into lipoylated derivatives. The protein is Lipoyl synthase of Burkholderia pseudomallei (strain 1106a).